The sequence spans 372 residues: Hydrogenase-2 small chain (372 aa).

The tat-type signal signal peptide spans 1 to 37 (MTGDNTLIHSHGINRRDFMKLCAALAATMGLSSKAAA). Cys-59, Cys-62, Cys-157, Cys-191, His-229, Cys-232, Cys-257, and Cys-263 together coordinate [4Fe-4S] cluster. [3Fe-4S] cluster-binding residues include Cys-272, Cys-292, and Cys-295.

It belongs to the [NiFe]/[NiFeSe] hydrogenase small subunit family. In terms of assembly, heterodimer of a large and a small subunit. It depends on [4Fe-4S] cluster as a cofactor. [3Fe-4S] cluster serves as cofactor. In terms of processing, predicted to be exported by the Tat system. The position of the signal peptide cleavage has not been experimentally proven.

It localises to the cell membrane. The protein localises to the periplasm. The catalysed reaction is H2 + A = AH2. Its function is as follows. This is one of three E.coli hydrogenases synthesized in response to different physiological conditions. HYD2 is involved in hydrogen uptake. In Escherichia coli O157:H7, this protein is Hydrogenase-2 small chain (hybO).